The sequence spans 461 residues: Probable ornithine decarboxylase (461 aa).

Residues 1–35 are disordered; it reads MTGTKRNGEEVVNENNNNNVAEETNKKAKVDESST. Positions 13 to 22 are enriched in low complexity; sequence NENNNNNVAE. Basic and acidic residues predominate over residues 23 to 32; it reads ETNKKAKVDE. Position 116 is an N6-(pyridoxal phosphate)lysine (K116). Residues S247, G284, and 317-320 contribute to the pyridoxal 5'-phosphate site; that span reads EPGR. 375–376 serves as a coordination point for substrate; the sequence is FD. C402 acts as the Proton donor; shared with dimeric partner in catalysis. Substrate is bound at residue D403. Y431 contributes to the pyridoxal 5'-phosphate binding site.

It belongs to the Orn/Lys/Arg decarboxylase class-II family. In terms of assembly, homodimer. Only the dimer is catalytically active, as the active sites are constructed of residues from both monomers. It depends on pyridoxal 5'-phosphate as a cofactor.

It catalyses the reaction L-ornithine + H(+) = putrescine + CO2. The protein operates within amine and polyamine biosynthesis; putrescine biosynthesis via L-ornithine pathway; putrescine from L-ornithine: step 1/1. With respect to regulation, inhibited by antizyme (AZ) in response to polyamine levels. AZ inhibits the assembly of the functional homodimer by binding to ODC monomers and targeting them for ubiquitin-independent proteolytic destruction by the 26S proteasome. In terms of biological role, catalyzes the first and rate-limiting step of polyamine biosynthesis that converts ornithine into putrescine, which is the precursor for the polyamines, spermidine and spermine. Polyamines are essential for cell proliferation and are implicated in cellular processes, ranging from DNA replication to apoptosis. In Dictyostelium discoideum (Social amoeba), this protein is Probable ornithine decarboxylase (odc).